Here is a 74-residue protein sequence, read N- to C-terminus: AELERLSEDDATAQALSYTHDASGVTHDSYQEGSRCSNCLLYSNPDAKDWGPCSVFPKHLVAEGGWCTAWVGRG.

4 residues coordinate [4Fe-4S] cluster: Cys36, Cys39, Cys53, and Cys67.

Homodimer.

Functionally, specific class of high-redox-potential 4Fe-4S ferredoxins. Functions in anaerobic electron transport in most purple and in some other photosynthetic bacteria and in at least one genus (Paracoccus) of halophilic, denitrifying bacteria. In Ectothiorhodospira mobilis, this protein is High-potential iron-sulfur protein isozyme 2.